The sequence spans 92 residues: Precursor of CEP12 (92 aa).

A signal peptide spans 1-30 (MVNRDNSIVALSFFMLFLLVLHLHFETTTA). Positions 31-70 (ARKPVRVFGPPSSIEWSPPSPPKDDFEWFEINIYKNIEQT) are excised as a propeptide. The segment at 70–92 (TAFRPTGQGPSQGIGHKDPPGAP) is disordered. Pro74 and Pro79 each carry hydroxyproline. The propeptide occupies 86–92 (KDPPGAP).

It belongs to the C-terminally encoded plant signaling peptide (CEP) family. In terms of assembly, interacts with CEP receptors (e.g. CEPR1 and CEPR2). Post-translationally, the mature small signaling peptide is generated by proteolytic processing of the longer precursor.

It is found in the secreted. It localises to the extracellular space. The protein localises to the apoplast. Functionally, extracellular signaling peptide that may regulate primary root growth rate and systemic nitrogen (N)-demand signaling. The sequence is that of Precursor of CEP12 from Arabidopsis thaliana (Mouse-ear cress).